A 267-amino-acid chain; its full sequence is Ribosomal RNA small subunit methyltransferase A (267 aa).

S-adenosyl-L-methionine is bound by residues N18, L20, G45, E66, D91, and N112.

The protein belongs to the class I-like SAM-binding methyltransferase superfamily. rRNA adenine N(6)-methyltransferase family. RsmA subfamily.

The protein localises to the cytoplasm. The enzyme catalyses adenosine(1518)/adenosine(1519) in 16S rRNA + 4 S-adenosyl-L-methionine = N(6)-dimethyladenosine(1518)/N(6)-dimethyladenosine(1519) in 16S rRNA + 4 S-adenosyl-L-homocysteine + 4 H(+). Functionally, specifically dimethylates two adjacent adenosines (A1518 and A1519) in the loop of a conserved hairpin near the 3'-end of 16S rRNA in the 30S particle. May play a critical role in biogenesis of 30S subunits. This is Ribosomal RNA small subunit methyltransferase A from Shewanella sediminis (strain HAW-EB3).